We begin with the raw amino-acid sequence, 150 residues long: Large ribosomal subunit protein bL9 (150 aa).

The protein belongs to the bacterial ribosomal protein bL9 family.

Functionally, binds to the 23S rRNA. This Variovorax paradoxus (strain S110) protein is Large ribosomal subunit protein bL9.